A 343-amino-acid chain; its full sequence is Anthranilate phosphoribosyltransferase (343 aa).

Residues G84, G87–D88, T92, N94–T97, K112–S120, and S124 contribute to the 5-phospho-alpha-D-ribose 1-diphosphate site. G84 provides a ligand contact to anthranilate. Position 96 (S96) interacts with Mg(2+). An anthranilate-binding site is contributed by N115. R170 contributes to the anthranilate binding site. Positions 229 and 230 each coordinate Mg(2+).

This sequence belongs to the anthranilate phosphoribosyltransferase family. Homodimer. The cofactor is Mg(2+).

The catalysed reaction is N-(5-phospho-beta-D-ribosyl)anthranilate + diphosphate = 5-phospho-alpha-D-ribose 1-diphosphate + anthranilate. The protein operates within amino-acid biosynthesis; L-tryptophan biosynthesis; L-tryptophan from chorismate: step 2/5. Functionally, catalyzes the transfer of the phosphoribosyl group of 5-phosphorylribose-1-pyrophosphate (PRPP) to anthranilate to yield N-(5'-phosphoribosyl)-anthranilate (PRA). This is Anthranilate phosphoribosyltransferase from Burkholderia pseudomallei (strain 1106a).